Consider the following 388-residue polypeptide: Leucine aminopeptidase 1 (388 aa).

An N-terminal signal peptide occupies residues 1 to 19 (MKLPALLILGVAASTMVLA). A propeptide spanning residues 20–88 (AIAPDQVPLN…LPKVFPTPAV (69 aa)) is cleaved from the precursor. Residues asparagine 96, asparagine 119, asparagine 149, asparagine 164, and asparagine 181 are each glycosylated (N-linked (GlcNAc...) asparagine). Positions 189 and 207 each coordinate Zn(2+). An N-linked (GlcNAc...) asparagine glycan is attached at asparagine 232. Positions 246 and 273 each coordinate Zn(2+). A disulfide bond links cysteine 322 and cysteine 326. A Zn(2+)-binding site is contributed by histidine 355.

This sequence belongs to the peptidase M28 family. M28E subfamily. Monomer. The cofactor is Zn(2+).

Its subcellular location is the secreted. Functionally, extracellular aminopeptidase that allows assimilation of proteinaceous substrates. The sequence is that of Leucine aminopeptidase 1 (LAP1) from Paracoccidioides brasiliensis (strain Pb03).